Here is a 367-residue protein sequence, read N- to C-terminus: Cystinosin (367 aa).

The first 22 residues, 1–22 (MIRRWLVIFILFPLQLIEKCES), serve as a signal peptide directing secretion. Residues 23 to 125 (TVDFSVPPIV…LVIHSNIVSI (103 aa)) are Lumenal-facing. Residues asparagine 51, asparagine 66, asparagine 84, asparagine 104, and asparagine 107 are each glycosylated (N-linked (GlcNAc...) asparagine). Positions 123–189 (VSIINQVIGW…LFWVPSIKEQ (67 aa)) constitute a PQ-loop 1 domain. A helical membrane pass occupies residues 126–150 (INQVIGWIYFVAWSVSFYPQVITNW). The Cytoplasmic portion of the chain corresponds to 151–159 (RRKSVVGLS). The helical transmembrane segment at 160 to 179 (FDFVVLNLMGFVAYSVFNIG) threads the bilayer. Asparagine 166 lines the L-cystine pocket. The Lumenal portion of the chain corresponds to 180 to 202 (LFWVPSIKEQFLLKYPNGVNPVD). A helical transmembrane segment spans residues 203-225 (SNDVFFSLHAVALTLVVIVQCLL). Aspartate 205 serves as a coordination point for H(+). At 226-234 (YERGSQRVS) the chain is on the cytoplasmic side. The helical transmembrane segment at 235 to 257 (WLAISFLVLSWLFTLIALIMAAV) threads the bilayer. Residues 258–263 (GATTWL) lie on the Lumenal side of the membrane. In terms of domain architecture, PQ-loop 2 spans 263–328 (LQFLFCFSYI…QSYNNDQWTL (66 aa)). The chain crosses the membrane as a helical span at residues 264–289 (QFLFCFSYIKLAVTLVKYFPQAYMNF). 3 residues coordinate L-cystine: lysine 273, lysine 280, and tyrosine 281. Residues 290–298 (HYKSTEGWS) lie on the Cytoplasmic side of the membrane. A helical membrane pass occupies residues 299–308 (IGNVLLDFTG). The L-cystine site is built by asparagine 301 and aspartate 305. Aspartate 305 lines the H(+) pocket. The Lumenal segment spans residues 309–331 (GSFSLLQMFLQSYNNDQWTLIFG). The chain crosses the membrane as a helical span at residues 332-354 (DPTKFGLGIFSIIFDVVFFIQHF). Aspartate 346 provides a ligand contact to H(+). At 355 to 367 (CLYRKKPGYDQLN) the chain is on the cytoplasmic side. The Lysosomal targeting motif motif lies at 362–366 (GYDQL).

This sequence belongs to the cystinosin family. Interacts with components of the V-ATPase complex. Interacts with components of the Ragulator complex. Interacts with RRAGA/RagA and RRAGC/RagC. Interacts with AP-3 complex subunit mu (AP3M1 or AP3M2).

The protein resides in the lysosome membrane. Its subcellular location is the melanosome membrane. It catalyses the reaction L-cystine(out) + H(+)(out) = L-cystine(in) + H(+)(in). With respect to regulation, switches between a lumen- and a cytosol-open conformation: pH induces conformational changes and shifts the equilibrium to facilitate the transition between the lumen- and cytosol-open conformation, thereby promoting cystine transport. Protonation of specific aspartate residues (Asp-205, Asp-305 and Asp-346) favors the cytosol-open conformation. Cystine/H(+) symporter that mediates export of cystine, the oxidized dimer of cysteine, from lysosomes. Plays an important role in melanin synthesis by catalyzing cystine export from melanosomes, possibly by inhibiting pheomelanin synthesis. In addition to cystine export, also acts as a positive regulator of mTORC1 signaling in kidney proximal tubular cells, via interactions with components of the v-ATPase and Ragulator complexes. Also involved in small GTPase-regulated vesicle trafficking and lysosomal localization of LAMP2A, independently of cystine transporter activity. The chain is Cystinosin from Bos taurus (Bovine).